Reading from the N-terminus, the 848-residue chain is Leucine--tRNA ligase (848 aa).

The interval 1–21 (MTENTPGTSAPERFDPATADT) is disordered. The short motif at 51-61 (PYPSGRIHIGH) is the 'HIGH' region element. The short motif at 625-629 (KMSKS) is the 'KMSKS' region element. Position 628 (Lys-628) interacts with ATP.

Belongs to the class-I aminoacyl-tRNA synthetase family.

The protein resides in the cytoplasm. The catalysed reaction is tRNA(Leu) + L-leucine + ATP = L-leucyl-tRNA(Leu) + AMP + diphosphate. The protein is Leucine--tRNA ligase of Novosphingobium aromaticivorans (strain ATCC 700278 / DSM 12444 / CCUG 56034 / CIP 105152 / NBRC 16084 / F199).